The following is a 432-amino-acid chain: Adenylosuccinate synthetase (432 aa).

GTP is bound by residues 13–19 (GDEGKGK) and 41–43 (GHT). The active-site Proton acceptor is D14. D14 and G41 together coordinate Mg(2+). IMP is bound by residues 14–17 (DEGK), 39–42 (NAGH), T130, R144, Q225, T240, and R304. The active-site Proton donor is the H42. 300–306 (AVTGRPR) lines the substrate pocket. GTP is bound by residues R306, 332-334 (KLD), and 415-417 (STG).

It belongs to the adenylosuccinate synthetase family. Homodimer. Mg(2+) serves as cofactor.

The protein localises to the cytoplasm. The catalysed reaction is IMP + L-aspartate + GTP = N(6)-(1,2-dicarboxyethyl)-AMP + GDP + phosphate + 2 H(+). Its pathway is purine metabolism; AMP biosynthesis via de novo pathway; AMP from IMP: step 1/2. In terms of biological role, plays an important role in the de novo pathway of purine nucleotide biosynthesis. Catalyzes the first committed step in the biosynthesis of AMP from IMP. In Haemophilus influenzae (strain ATCC 51907 / DSM 11121 / KW20 / Rd), this protein is Adenylosuccinate synthetase.